Consider the following 638-residue polypeptide: Leucine-rich repeat-containing protein 63 (638 aa).

Disordered stretches follow at residues 220-241 (VPST…PSAA) and 306-325 (TTAA…TVQR). LRR repeat units lie at residues 389 to 412 (AFQL…ILYL), 413 to 435 (QNLQ…IHLL), 437 to 458 (YLRI…LFCL), 460 to 481 (YLEE…IQKL), 482 to 504 (RSLE…ILKL), and 532 to 556 (LTQI…VRKS).

This Mus musculus (Mouse) protein is Leucine-rich repeat-containing protein 63.